Consider the following 351-residue polypeptide: Putative NBPF family member NBPF5 (351 aa).

2 coiled-coil regions span residues 10-43 (SERA…EKFL) and 69-115 (DSVL…KLRE). Residues 157–285 (HLVHKLSPEN…VPPRHHDKSN (129 aa)) form a disordered region. Positions 165 to 179 (ENDEDEDEDEDDKDE) are enriched in acidic residues. The Olduvai domain occupies 174-261 (EDDKDEEVEK…EEEEALNIPP (88 aa)). The segment covering 192-202 (EVQKTEEKEVP) has biased composition (basic and acidic residues). Residues 214-226 (SNSHNPSNSNQPH) show a composition bias toward low complexity. 2 stretches are compositionally biased toward basic and acidic residues: residues 232 to 251 (TFKE…HPHD) and 264 to 273 (QNDHEEEEGK).

This sequence belongs to the NBPF family. As to expression, expressed in brain and medulla.

Its subcellular location is the cytoplasm. This chain is Putative NBPF family member NBPF5, found in Homo sapiens (Human).